Consider the following 337-residue polypeptide: Probable cytosolic iron-sulfur protein assembly protein CIAO1 homolog (337 aa).

WD repeat units follow at residues 15-54, 65-104, 109-148, 154-193, 199-238, 253-292, and 301-337; these read DDTS…DSKM, SHTR…FAEV, GHES…DFSV, PHTQ…WVTQ, CHVG…SKSA, NTRW…ESPV, and RHEL…ELEI.

Belongs to the WD repeat CIA1 family.

Essential component of the cytosolic iron-sulfur (Fe/S) protein assembly machinery. Required for the maturation of extramitochondrial Fe/S proteins. This Caenorhabditis elegans protein is Probable cytosolic iron-sulfur protein assembly protein CIAO1 homolog.